The primary structure comprises 251 residues: Zwei Ig domain protein zig-3 (251 aa).

The N-terminal stretch at M1–S19 is a signal peptide. Ig-like C2-type domains are found at residues P42–S144 and P160–Y244. Disulfide bonds link C65-C128 and C181-C228.

In terms of tissue distribution, expressed in PVT, AIM and ASI neurons, in vulva and weakly in body wall muscles.

It localises to the secreted. Its function is as follows. Required for maintaining axon position of PVQ and PVP neurons postembryonically in the ventral nerve cord (VNC) by preventing axons drifting into the opposite side of the VNC that could occur during body growth and movement. The protein is Zwei Ig domain protein zig-3 of Caenorhabditis elegans.